The following is a 264-amino-acid chain: tRNA pseudouridine synthase A (264 aa).

Aspartate 51 (nucleophile) is an active-site residue. Tyrosine 109 is a binding site for substrate.

Belongs to the tRNA pseudouridine synthase TruA family. Homodimer.

The catalysed reaction is uridine(38/39/40) in tRNA = pseudouridine(38/39/40) in tRNA. Its function is as follows. Formation of pseudouridine at positions 38, 39 and 40 in the anticodon stem and loop of transfer RNAs. In Staphylococcus aureus (strain MRSA252), this protein is tRNA pseudouridine synthase A.